Here is a 91-residue protein sequence, read N- to C-terminus: Small ribosomal subunit protein uS19 (91 aa).

This sequence belongs to the universal ribosomal protein uS19 family.

In terms of biological role, protein S19 forms a complex with S13 that binds strongly to the 16S ribosomal RNA. This chain is Small ribosomal subunit protein uS19, found in Synechococcus sp. (strain RCC307).